The following is a 422-amino-acid chain: Dihydrofolate synthase/folylpolyglutamate synthase (422 aa).

Residue 29–31 participates in 7,8-dihydropteroate binding; that stretch reads DLG. Residue 59 to 62 coordinates ATP; sequence GKGT. S83 serves as a coordination point for Mg(2+). 122–125 lines the 7,8-dihydropteroate pocket; sequence TYFE. E146 lines the Mg(2+) pocket. 7,8-dihydropteroate is bound at residue 153-155; the sequence is LDA. H173 serves as a coordination point for Mg(2+). K188 bears the N6-carboxylysine mark. ATP is bound by residues N257, R289, and D302.

It belongs to the folylpolyglutamate synthase family. As to quaternary structure, monomer. The cofactor is Mg(2+).

The catalysed reaction is 7,8-dihydropteroate + L-glutamate + ATP = 7,8-dihydrofolate + ADP + phosphate + H(+). It catalyses the reaction (6S)-5,6,7,8-tetrahydrofolyl-(gamma-L-Glu)(n) + L-glutamate + ATP = (6S)-5,6,7,8-tetrahydrofolyl-(gamma-L-Glu)(n+1) + ADP + phosphate + H(+). It carries out the reaction 10-formyltetrahydrofolyl-(gamma-L-Glu)(n) + L-glutamate + ATP = 10-formyltetrahydrofolyl-(gamma-L-Glu)(n+1) + ADP + phosphate + H(+). The enzyme catalyses (6R)-5,10-methylenetetrahydrofolyl-(gamma-L-Glu)(n) + L-glutamate + ATP = (6R)-5,10-methylenetetrahydrofolyl-(gamma-L-Glu)(n+1) + ADP + phosphate + H(+). Its pathway is cofactor biosynthesis; tetrahydrofolate biosynthesis; 7,8-dihydrofolate from 2-amino-4-hydroxy-6-hydroxymethyl-7,8-dihydropteridine diphosphate and 4-aminobenzoate: step 2/2. It functions in the pathway cofactor biosynthesis; tetrahydrofolylpolyglutamate biosynthesis. Functionally, functions in two distinct reactions of the de novo folate biosynthetic pathway. Catalyzes the addition of a glutamate residue to dihydropteroate (7,8-dihydropteroate or H2Pte) to form dihydrofolate (7,8-dihydrofolate monoglutamate or H2Pte-Glu). Also catalyzes successive additions of L-glutamate to tetrahydrofolate or 10-formyltetrahydrofolate or 5,10-methylenetetrahydrofolate, leading to folylpolyglutamate derivatives. This Escherichia coli (strain K12) protein is Dihydrofolate synthase/folylpolyglutamate synthase.